The chain runs to 119 residues: V-type proton ATPase subunit F (119 aa).

It belongs to the V-ATPase F subunit family. As to quaternary structure, V-ATPase is a heteromultimeric enzyme made up of two complexes: the ATP-hydrolytic V1 complex and the proton translocation V0 complex. The V1 complex consists of three catalytic AB heterodimers that form a heterohexamer, three peripheral stalks each consisting of EG heterodimers, one central rotor including subunits D and F, and the regulatory subunits C and H. The proton translocation complex V0 consists of the proton transport subunit a, a ring of proteolipid subunits c9c'', rotary subunit d, subunits e and f, and the accessory subunits ATP6AP1/Ac45 and ATP6AP2/PRR.

Its subcellular location is the cytoplasmic vesicle. The protein localises to the secretory vesicle. The protein resides in the synaptic vesicle membrane. It localises to the clathrin-coated vesicle membrane. Subunit of the V1 complex of vacuolar(H+)-ATPase (V-ATPase), a multisubunit enzyme composed of a peripheral complex (V1) that hydrolyzes ATP and a membrane integral complex (V0) that translocates protons. V-ATPase is responsible for acidifying and maintaining the pH of intracellular compartments and in some cell types, is targeted to the plasma membrane, where it is responsible for acidifying the extracellular environment. This Homo sapiens (Human) protein is V-type proton ATPase subunit F (ATP6V1F).